A 333-amino-acid chain; its full sequence is Probable cytosolic iron-sulfur protein assembly protein ciao1-B (333 aa).

7 WD repeats span residues 14–53 (HPDS…WECK), 59–98 (GHQR…FECL), 103–142 (GHEN…EYEC), 148–187 (SHTQ…WECR), 192–231 (GHTS…GGQE), 246–285 (FHGR…DPDQ), and 297–333 (AHTQ…QSGV).

This sequence belongs to the WD repeat CIA1 family. In terms of assembly, component of the CIA complex.

Functionally, key component of the cytosolic iron-sulfur protein assembly (CIA) complex, a multiprotein complex that mediates the incorporation of iron-sulfur cluster into extramitochondrial Fe/S proteins. The sequence is that of Probable cytosolic iron-sulfur protein assembly protein ciao1-B (ciao1b) from Salmo salar (Atlantic salmon).